Reading from the N-terminus, the 656-residue chain is Probable Xaa-Pro aminopeptidase P (656 aa).

Positions 453, 464, 562, and 576 each coordinate Mn(2+).

Belongs to the peptidase M24B family. The cofactor is Mn(2+).

The catalysed reaction is Release of any N-terminal amino acid, including proline, that is linked to proline, even from a dipeptide or tripeptide.. Catalyzes the removal of a penultimate prolyl residue from the N-termini of peptides. This chain is Probable Xaa-Pro aminopeptidase P (ampp), found in Pyrenophora teres f. teres (strain 0-1) (Barley net blotch fungus).